Here is a 201-residue protein sequence, read N- to C-terminus: NAD(P)H quinone oxidoreductase PST2 (201 aa).

A Flavodoxin-like domain is found at 6–192 (VAIIIYSLYH…SIAQQQGEDF (187 aa)). FMN-binding positions include 12–16 (SLYHH) and 112–164 (VFVS…SPWG).

It belongs to the WrbA family. Requires FMN as cofactor.

It is found in the cell membrane. It catalyses the reaction a quinone + NADH + H(+) = a quinol + NAD(+). The enzyme catalyses a quinone + NADPH + H(+) = a quinol + NADP(+). Flavodoxin-like protein (FLP) that plays a role in cell wall integrity, oxidative stress protection and virulence. FLPs act as NAD(P)H quinone oxidoreductases. Reduces ubiquinone (coenzyme Q), enabling it to serve as an antioxidant in the membrane. This is NAD(P)H quinone oxidoreductase PST2 from Candida albicans (strain SC5314 / ATCC MYA-2876) (Yeast).